We begin with the raw amino-acid sequence, 365 residues long: S-type anion channel SLAH4 (365 aa).

The Cytoplasmic portion of the chain corresponds to 1–25; the sequence is MEIPSQEIHIMIDNTISRRKERKTN. The chain crosses the membrane as a helical span at residues 26–46; the sequence is LADAEPIVLMSVLSSLHAGYF. Over 47–73 the chain is Extracellular; that stretch reads RISLSLCSQALLWKIMVHLHSELPSMA. The chain crosses the membrane as a helical span at residues 74–94; the sequence is YYLLWYLALATQVSLCFLYAF. At 95–106 the chain is on the cytoplasmic side; the sequence is KCIFLFDMVKEE. Residues 107 to 127 form a helical membrane-spanning segment; that stretch reads FSHYIGVNYLYAPSISCLLLL. Residues 128 to 131 are Extracellular-facing; that stretch reads QSAP. A helical membrane pass occupies residues 132-152; sequence MIEPHSVLYQTLFWIFAVPVL. At 153-168 the chain is on the cytoplasmic side; the sequence is TLDTKLYGQWFTTEKR. The chain crosses the membrane as a helical span at residues 169-189; that stretch reads FLSIMANPASQVSVIANLVAA. Residues 190–199 are Extracellular-facing; the sequence is RGAAEMGWKE. The helical transmembrane segment at 200–220 threads the bilayer; that stretch reads CALCLFSLGMVHYLVIFVTLY. Residues 221–235 lie on the Cytoplasmic side of the membrane; sequence QRLPGGNNFPTTLRP. A helical membrane pass occupies residues 236–256; sequence VFFLFFAAPATASLAWNSICG. A topological domain (extracellular) is located at residue Asn257. The helical transmembrane segment at 258–278 threads the bilayer; that stretch reads FDTIAKMLFFLSLFIFISLVC. Residues 279-291 lie on the Cytoplasmic side of the membrane; sequence RPNLLKKSIKRFN. The chain crosses the membrane as a helical span at residues 292–312; the sequence is VAWWAYSFPITFLALNSVQYA. The Extracellular portion of the chain corresponds to 313–321; the sequence is QEVKDHVAS. Residues 322-342 traverse the membrane as a helical segment; that stretch reads VLMFIFSSMSVLIFISVMLLT. Residues 343 to 365 lie on the Cytoplasmic side of the membrane; the sequence is AANSKRLLRRDHVLWSSTGPKDK.

Belongs to the SLAC1 S-type anion channel family. In terms of assembly, homotrimer.

It is found in the cell membrane. Slow, weak voltage-dependent S-type anion efflux channel involved in maintenance of anion homeostasis. The chain is S-type anion channel SLAH4 (SLAH4) from Arabidopsis thaliana (Mouse-ear cress).